The sequence spans 194 residues: Large ribosomal subunit protein eL15 (194 aa).

Residues 168–194 (RSRGLLNKGKGAEKVRPSIRAHQGKGK) are disordered. Over residues 184–194 (PSIRAHQGKGK) the composition is skewed to basic residues.

Belongs to the eukaryotic ribosomal protein eL15 family. In terms of assembly, part of the 50S ribosomal subunit.

This is Large ribosomal subunit protein eL15 from Thermococcus kodakarensis (strain ATCC BAA-918 / JCM 12380 / KOD1) (Pyrococcus kodakaraensis (strain KOD1)).